Here is a 259-residue protein sequence, read N- to C-terminus: ATP synthase subunit a 1 (259 aa).

The next 5 helical transmembrane spans lie at 30–50 (TLHV…LFFF), 90–110 (LIAP…AMDL), 135–155 (DLNA…FYSL), 209–229 (LIFI…SFPW), and 230–250 (AVFH…LTIV).

Belongs to the ATPase A chain family. As to quaternary structure, F-type ATPases have 2 components, CF(1) - the catalytic core - and CF(0) - the membrane proton channel. CF(1) has five subunits: alpha(3), beta(3), gamma(1), delta(1), epsilon(1). CF(0) has three main subunits: a(1), b(2) and c(9-12). The alpha and beta chains form an alternating ring which encloses part of the gamma chain. CF(1) is attached to CF(0) by a central stalk formed by the gamma and epsilon chains, while a peripheral stalk is formed by the delta and b chains.

The protein resides in the cell inner membrane. In terms of biological role, key component of the proton channel; it plays a direct role in the translocation of protons across the membrane. This Methylococcus capsulatus (strain ATCC 33009 / NCIMB 11132 / Bath) protein is ATP synthase subunit a 1.